Consider the following 168-residue polypeptide: Ribosome maturation factor RimP (168 aa).

It belongs to the RimP family.

It is found in the cytoplasm. Its function is as follows. Required for maturation of 30S ribosomal subunits. In Mycoplasma mobile (strain ATCC 43663 / 163K / NCTC 11711) (Mesomycoplasma mobile), this protein is Ribosome maturation factor RimP.